The following is a 227-amino-acid chain: uncharacterized protein (227 aa).

The N-terminal stretch at 1–23 (MKKRFSLIMMTGLLFGLTSPAFA) is a signal peptide. In terms of domain architecture, VWFA spans 36–227 (NVAVLLDASG…FTQQSLMLSK (192 aa)).

It to B.subtilis YwmD.

This is an uncharacterized protein from Bacillus subtilis (strain 168).